Reading from the N-terminus, the 228-residue chain is Lipoprotein-releasing system ATP-binding protein LolD (228 aa).

Residues 6–228 enclose the ABC transporter domain; the sequence is IKCLNVVKGY…EAGVLNKQGQ (223 aa). 42 to 49 serves as a coordination point for ATP; sequence GASGSGKS.

The protein belongs to the ABC transporter superfamily. Lipoprotein translocase (TC 3.A.1.125) family. As to quaternary structure, the complex is composed of two ATP-binding proteins (LolD) and two transmembrane proteins (LolC and LolE).

It is found in the cell inner membrane. Part of the ABC transporter complex LolCDE involved in the translocation of mature outer membrane-directed lipoproteins, from the inner membrane to the periplasmic chaperone, LolA. Responsible for the formation of the LolA-lipoprotein complex in an ATP-dependent manner. In Saccharophagus degradans (strain 2-40 / ATCC 43961 / DSM 17024), this protein is Lipoprotein-releasing system ATP-binding protein LolD.